We begin with the raw amino-acid sequence, 273 residues long: Dermonecrotic toxin LhSicTox-alphaIA2biii (273 aa).

The active site involves histidine 5. Residues glutamate 25 and aspartate 27 each contribute to the Mg(2+) site. Histidine 41 serves as the catalytic Nucleophile. Disulfide bonds link cysteine 45–cysteine 51 and cysteine 47–cysteine 190. Aspartate 85 contacts Mg(2+).

The protein belongs to the arthropod phospholipase D family. Class II subfamily. It depends on Mg(2+) as a cofactor. As to expression, expressed by the venom gland.

Its subcellular location is the secreted. The catalysed reaction is an N-(acyl)-sphingosylphosphocholine = an N-(acyl)-sphingosyl-1,3-cyclic phosphate + choline. The enzyme catalyses an N-(acyl)-sphingosylphosphoethanolamine = an N-(acyl)-sphingosyl-1,3-cyclic phosphate + ethanolamine. It carries out the reaction a 1-acyl-sn-glycero-3-phosphocholine = a 1-acyl-sn-glycero-2,3-cyclic phosphate + choline. It catalyses the reaction a 1-acyl-sn-glycero-3-phosphoethanolamine = a 1-acyl-sn-glycero-2,3-cyclic phosphate + ethanolamine. In terms of biological role, dermonecrotic toxins cleave the phosphodiester linkage between the phosphate and headgroup of certain phospholipids (sphingolipid and lysolipid substrates), forming an alcohol (often choline) and a cyclic phosphate. This toxin acts on sphingomyelin (SM). It may also act on ceramide phosphoethanolamine (CPE), lysophosphatidylcholine (LPC) and lysophosphatidylethanolamine (LPE), but not on lysophosphatidylserine (LPS), and lysophosphatidylglycerol (LPG). It acts by transphosphatidylation, releasing exclusively cyclic phosphate products as second products. Induces dermonecrosis, hemolysis, increased vascular permeability, edema, inflammatory response, and platelet aggregation. This Loxosceles hirsuta (Recluse spider) protein is Dermonecrotic toxin LhSicTox-alphaIA2biii.